We begin with the raw amino-acid sequence, 452 residues long: Bifunctional protein GlmU (452 aa).

The pyrophosphorylase stretch occupies residues 1–225 (MDVVILAAGL…ENELIGINTR (225 aa)). UDP-N-acetyl-alpha-D-glucosamine contacts are provided by residues 6-9 (LAAG), Lys-20, Gln-71, and 76-77 (GT). Asp-99 provides a ligand contact to Mg(2+). Positions 136, 151, 166, and 223 each coordinate UDP-N-acetyl-alpha-D-glucosamine. A Mg(2+)-binding site is contributed by Asn-223. Residues 226–246 (AELSLAMRYLRDRIVKGWMEK) form a linker region. The segment at 247–452 (GITFYDPALV…LGWAKKKRKQ (206 aa)) is N-acetyltransferase. Arg-329 and Lys-347 together coordinate UDP-N-acetyl-alpha-D-glucosamine. The active-site Proton acceptor is the His-359. Residues Tyr-362 and Asn-373 each contribute to the UDP-N-acetyl-alpha-D-glucosamine site. Acetyl-CoA-binding positions include Ala-376, 382–383 (NY), Ser-401, Ala-419, and Arg-436.

The protein in the N-terminal section; belongs to the N-acetylglucosamine-1-phosphate uridyltransferase family. It in the C-terminal section; belongs to the transferase hexapeptide repeat family. In terms of assembly, homotrimer. Requires Mg(2+) as cofactor.

The protein localises to the cytoplasm. It catalyses the reaction alpha-D-glucosamine 1-phosphate + acetyl-CoA = N-acetyl-alpha-D-glucosamine 1-phosphate + CoA + H(+). It carries out the reaction N-acetyl-alpha-D-glucosamine 1-phosphate + UTP + H(+) = UDP-N-acetyl-alpha-D-glucosamine + diphosphate. It participates in nucleotide-sugar biosynthesis; UDP-N-acetyl-alpha-D-glucosamine biosynthesis; N-acetyl-alpha-D-glucosamine 1-phosphate from alpha-D-glucosamine 6-phosphate (route II): step 2/2. It functions in the pathway nucleotide-sugar biosynthesis; UDP-N-acetyl-alpha-D-glucosamine biosynthesis; UDP-N-acetyl-alpha-D-glucosamine from N-acetyl-alpha-D-glucosamine 1-phosphate: step 1/1. The protein operates within bacterial outer membrane biogenesis; LPS lipid A biosynthesis. Functionally, catalyzes the last two sequential reactions in the de novo biosynthetic pathway for UDP-N-acetylglucosamine (UDP-GlcNAc). The C-terminal domain catalyzes the transfer of acetyl group from acetyl coenzyme A to glucosamine-1-phosphate (GlcN-1-P) to produce N-acetylglucosamine-1-phosphate (GlcNAc-1-P), which is converted into UDP-GlcNAc by the transfer of uridine 5-monophosphate (from uridine 5-triphosphate), a reaction catalyzed by the N-terminal domain. The sequence is that of Bifunctional protein GlmU from Thermodesulfovibrio yellowstonii (strain ATCC 51303 / DSM 11347 / YP87).